We begin with the raw amino-acid sequence, 158 residues long: Xanthine-guanine phosphoribosyltransferase (158 aa).

5-phospho-alpha-D-ribose 1-diphosphate contacts are provided by residues 38–39 (RG) and 90–98 (DDLVDTGGT). Asp91 serves as a coordination point for Mg(2+). Guanine-binding residues include Asp94 and Ile137. Asp94 and Ile137 together coordinate xanthine. GMP is bound by residues 94–98 (DTGGT) and 136–137 (WI).

The protein belongs to the purine/pyrimidine phosphoribosyltransferase family. XGPT subfamily. In terms of assembly, homotetramer. The cofactor is Mg(2+).

The protein localises to the cell inner membrane. The enzyme catalyses GMP + diphosphate = guanine + 5-phospho-alpha-D-ribose 1-diphosphate. It catalyses the reaction XMP + diphosphate = xanthine + 5-phospho-alpha-D-ribose 1-diphosphate. It carries out the reaction IMP + diphosphate = hypoxanthine + 5-phospho-alpha-D-ribose 1-diphosphate. It participates in purine metabolism; GMP biosynthesis via salvage pathway; GMP from guanine: step 1/1. Its pathway is purine metabolism; XMP biosynthesis via salvage pathway; XMP from xanthine: step 1/1. Purine salvage pathway enzyme that catalyzes the transfer of the ribosyl-5-phosphate group from 5-phospho-alpha-D-ribose 1-diphosphate (PRPP) to the N9 position of the 6-oxopurines guanine and xanthine to form the corresponding ribonucleotides GMP (guanosine 5'-monophosphate) and XMP (xanthosine 5'-monophosphate), with the release of PPi. To a lesser extent, also acts on hypoxanthine. The protein is Xanthine-guanine phosphoribosyltransferase of Buchnera aphidicola subsp. Acyrthosiphon pisum (strain APS) (Acyrthosiphon pisum symbiotic bacterium).